The chain runs to 300 residues: Putative heme-binding peroxidase (300 aa).

Histidine 39 (proton acceptor) is an active-site residue. 2 disordered regions span residues tyrosine 44–glycine 64 and glycine 116–alanine 135. Residues glycine 116–valine 126 are compositionally biased toward basic and acidic residues. A heme b-binding site is contributed by histidine 163. Tryptophan 179 functions as the Tryptophan radical intermediate in the catalytic mechanism.

Belongs to the peroxidase family. Cytochrome c peroxidase subfamily. Heme b is required as a cofactor.

Its function is as follows. Destroys radicals which are normally produced within the cells and which are toxic to biological systems. This Pyricularia oryzae (strain 70-15 / ATCC MYA-4617 / FGSC 8958) (Rice blast fungus) protein is Putative heme-binding peroxidase.